The primary structure comprises 302 residues: 4-hydroxy-tetrahydrodipicolinate synthase (302 aa).

Threonine 46 is a binding site for pyruvate. The active-site Proton donor/acceptor is the tyrosine 134. Residue lysine 162 is the Schiff-base intermediate with substrate of the active site. Residue valine 204 coordinates pyruvate.

This sequence belongs to the DapA family. In terms of assembly, homotetramer; dimer of dimers.

Its subcellular location is the cytoplasm. The enzyme catalyses L-aspartate 4-semialdehyde + pyruvate = (2S,4S)-4-hydroxy-2,3,4,5-tetrahydrodipicolinate + H2O + H(+). It participates in amino-acid biosynthesis; L-lysine biosynthesis via DAP pathway; (S)-tetrahydrodipicolinate from L-aspartate: step 3/4. Catalyzes the condensation of (S)-aspartate-beta-semialdehyde [(S)-ASA] and pyruvate to 4-hydroxy-tetrahydrodipicolinate (HTPA). This chain is 4-hydroxy-tetrahydrodipicolinate synthase, found in Xylella fastidiosa (strain Temecula1 / ATCC 700964).